Consider the following 184-residue polypeptide: UPF0316 protein BLi00691/BL01474 (184 aa).

3 helical membrane passes run 9–29 (GVIM…FLTL), 41–61 (LAAF…GLVL), and 67–87 (IQNV…GTKI).

The protein belongs to the UPF0316 family.

The protein localises to the cell membrane. The chain is UPF0316 protein BLi00691/BL01474 from Bacillus licheniformis (strain ATCC 14580 / DSM 13 / JCM 2505 / CCUG 7422 / NBRC 12200 / NCIMB 9375 / NCTC 10341 / NRRL NRS-1264 / Gibson 46).